The following is a 1094-amino-acid chain: Transport and Golgi organization protein 6 homolog (1094 aa).

The chain crosses the membrane as a helical span at residues 468-488 (LTVLMDSLLPVLGVLFLLYCF). S556 is subject to Phosphoserine. Positions 777 to 795 (EEQQQTSHERPTDVAHSHL) are enriched in basic and acidic residues. A disordered region spans residues 777–834 (EEQQQTSHERPTDVAHSHLEQQQSHETAPQTGLQSNAPIIPQGVNEPSTTTSQKSGSV). Composition is skewed to polar residues over residues 796 to 813 (EQQQ…QSNA) and 821 to 834 (NEPS…SGSV). HEAT repeat units follow at residues 873–909 (LEMQ…SDVY) and 952–988 (SKYR…CQRL).

The protein belongs to the Tango6 family.

Its subcellular location is the membrane. This chain is Transport and Golgi organization protein 6 homolog (TANGO6), found in Homo sapiens (Human).